The chain runs to 218 residues: uncharacterized protein (218 aa).

This is an uncharacterized protein from Methanocaldococcus jannaschii (strain ATCC 43067 / DSM 2661 / JAL-1 / JCM 10045 / NBRC 100440) (Methanococcus jannaschii).